The following is a 590-amino-acid chain: Aspartate--tRNA(Asp/Asn) ligase (590 aa).

Glu-170 is a binding site for L-aspartate. Residues 194–197 (QLFK) are aspartate. Residue Arg-216 coordinates L-aspartate. Residues 216-218 (RDE) and Gln-225 contribute to the ATP site. His-448 lines the L-aspartate pocket. Glu-482 provides a ligand contact to ATP. Position 489 (Arg-489) interacts with L-aspartate. 534 to 537 (GWDR) contributes to the ATP binding site. The disordered stretch occupies residues 557–590 (SGGGADPLTGAPAPITPQQRRESGIDAKPKKDGE). Positions 575-590 (QRRESGIDAKPKKDGE) are enriched in basic and acidic residues.

This sequence belongs to the class-II aminoacyl-tRNA synthetase family. Type 1 subfamily. As to quaternary structure, homodimer.

The protein resides in the cytoplasm. It catalyses the reaction tRNA(Asx) + L-aspartate + ATP = L-aspartyl-tRNA(Asx) + AMP + diphosphate. In terms of biological role, aspartyl-tRNA synthetase with relaxed tRNA specificity since it is able to aspartylate not only its cognate tRNA(Asp) but also tRNA(Asn). Reaction proceeds in two steps: L-aspartate is first activated by ATP to form Asp-AMP and then transferred to the acceptor end of tRNA(Asp/Asn). The polypeptide is Aspartate--tRNA(Asp/Asn) ligase (Mycobacterium sp. (strain JLS)).